We begin with the raw amino-acid sequence, 514 residues long: Putative transposase y4uI (514 aa).

The 83-residue stretch at 11 to 93 folds into the HTH IS408-type domain; the sequence is VREILKLRLD…PDWSAVAREL (83 aa). The region spanning 128-317 is the Integrase catalytic domain; the sequence is HGRLPLVMRQ…TRRALFDELD (190 aa).

The protein belongs to the transposase IS21/IS408/IS1162 family.

This chain is Putative transposase y4uI, found in Sinorhizobium fredii (strain NBRC 101917 / NGR234).